The primary structure comprises 245 residues: UPF0319 protein VV0984 (245 aa).

A signal peptide spans 1 to 20 (MRYIGKWMMLGALVSSSVFA).

This sequence belongs to the UPF0319 family.

This is UPF0319 protein VV0984 from Vibrio vulnificus (strain YJ016).